The following is a 243-amino-acid chain: NAD-dependent protein deacetylase (243 aa).

The Deacetylase sirtuin-type domain maps to 1 to 243 (MRNDLETLKH…VSVVKSLMTE (243 aa)). Positions 24, 35, 36, 105, 107, 108, and 123 each coordinate NAD(+). F35 provides a ligand contact to nicotinamide. Residues I107 and D108 each contribute to the nicotinamide site. The Proton acceptor role is filled by H123. Residues C131, C134, C151, and C154 each coordinate Zn(2+). The NAD(+) site is built by S192, S193, N215, and D232.

This sequence belongs to the sirtuin family. Class U subfamily. Requires Zn(2+) as cofactor.

Its subcellular location is the cytoplasm. The enzyme catalyses N(6)-acetyl-L-lysyl-[protein] + NAD(+) + H2O = 2''-O-acetyl-ADP-D-ribose + nicotinamide + L-lysyl-[protein]. In terms of biological role, NAD-dependent protein deacetylase which modulates the activities of several enzymes which are inactive in their acetylated form. This chain is NAD-dependent protein deacetylase, found in Staphylococcus aureus (strain Mu50 / ATCC 700699).